The primary structure comprises 67 residues: SPbeta prophage-derived uncharacterized protein YoqK (67 aa).

This chain is SPbeta prophage-derived uncharacterized protein YoqK (yoqK), found in Bacillus subtilis (strain 168).